The chain runs to 60 residues: Large ribosomal subunit protein uL30 (60 aa).

Belongs to the universal ribosomal protein uL30 family. Part of the 50S ribosomal subunit.

This chain is Large ribosomal subunit protein uL30, found in Dehalococcoides mccartyi (strain CBDB1).